We begin with the raw amino-acid sequence, 356 residues long: Chitin elicitor-binding protein (356 aa).

A signal peptide spans 1–28; the sequence is MASLTAALATPAAAALLLLVLLAAPASA. Asn-30 carries N-linked (GlcNAc...) asparagine glycosylation. Disulfide bonds link Cys-33–Cys-100, Cys-41–Cys-164, Cys-98–Cys-162, and Cys-100–Cys-164. 50-51 is a chitin binding site; the sequence is PN. 2 N-linked (GlcNAc...) asparagine glycosylation sites follow: Asn-63 and Asn-89. 2 LysM domains span residues 111 to 158 and 175 to 219; these read PIYV…TLWI and LAYS…ILDV. Residues 117–123, Asn-142, 145–152, Thr-155, and Gly-182 each bind chitin; these read PQDGLDA and PDPNKINV. The N-linked (GlcNAc...) asparagine glycan is linked to Asn-151. Residue Asn-184 is glycosylated (N-linked (GlcNAc...) asparagine). Residues Ser-186 and 211–213 contribute to the chitin site; that span reads LQM. Cystine bridges form between Cys-224-Cys-257 and Cys-252-Cys-274. Residues Asn-265, Asn-281, Asn-290, Asn-306, and Asn-319 are each glycosylated (N-linked (GlcNAc...) asparagine). Residues 336–356 traverse the membrane as a helical segment; that stretch reads RSMWSMSVISFHMVLIIICFL.

In terms of assembly, forms homooligomer. Interacts with CERK1. Binds to chitin oligosaccharide elicitor. Interacts with LYP4 and LYP6. Post-translationally, N-glycosylated. Expressed in seedlings, roots, shoots, stems and flowers.

It localises to the cell membrane. In terms of biological role, chitin elicitor-binding protein involved in the perception and transduction of chitin oligosaccharide elicitor signal for defense responses. In Oryza sativa subsp. japonica (Rice), this protein is Chitin elicitor-binding protein.